The sequence spans 145 residues: D-aminoacyl-tRNA deacylase (145 aa).

A Gly-cisPro motif, important for rejection of L-amino acids motif is present at residues Gly137–Pro138.

The protein belongs to the DTD family. In terms of assembly, homodimer.

The protein resides in the cytoplasm. The enzyme catalyses glycyl-tRNA(Ala) + H2O = tRNA(Ala) + glycine + H(+). It carries out the reaction a D-aminoacyl-tRNA + H2O = a tRNA + a D-alpha-amino acid + H(+). An aminoacyl-tRNA editing enzyme that deacylates mischarged D-aminoacyl-tRNAs. Also deacylates mischarged glycyl-tRNA(Ala), protecting cells against glycine mischarging by AlaRS. Acts via tRNA-based rather than protein-based catalysis; rejects L-amino acids rather than detecting D-amino acids in the active site. By recycling D-aminoacyl-tRNA to D-amino acids and free tRNA molecules, this enzyme counteracts the toxicity associated with the formation of D-aminoacyl-tRNA entities in vivo and helps enforce protein L-homochirality. This chain is D-aminoacyl-tRNA deacylase, found in Lactobacillus gasseri (strain ATCC 33323 / DSM 20243 / BCRC 14619 / CIP 102991 / JCM 1131 / KCTC 3163 / NCIMB 11718 / NCTC 13722 / AM63).